A 695-amino-acid polypeptide reads, in one-letter code: Follicle-stimulating hormone receptor (695 aa).

A signal peptide spans methionine 1–glycine 17. 2 disulfide bridges follow: cysteine 18–cysteine 25 and cysteine 23–cysteine 32. In terms of domain architecture, LRRNT spans cysteine 18–arginine 46. Topologically, residues cysteine 18–arginine 366 are extracellular. LRR repeat units follow at residues valine 49–leucine 72, glutamate 73–leucine 97, histidine 98–asparagine 118, leucine 119–serine 143, leucine 144–serine 169, phenylalanine 170–glycine 192, threonine 193–glycine 216, alanine 217–asparagine 240, and isoleucine 241–aspartate 259. Asparagine 93 is a glycosylation site (N-linked (GlcNAc...) asparagine). 2 N-linked (GlcNAc...) asparagine glycosylation sites follow: asparagine 191 and asparagine 199. Intrachain disulfides connect cysteine 275/cysteine 346, cysteine 276/cysteine 292, cysteine 276/cysteine 356, and cysteine 292/cysteine 338. A glycan (N-linked (GlcNAc...) asparagine) is linked at asparagine 293. Sulfotyrosine is present on tyrosine 335. A helical membrane pass occupies residues valine 367 to leucine 387. Residues isoleucine 388–arginine 398 are Cytoplasmic-facing. A helical transmembrane segment spans residues phenylalanine 399–alanine 419. The Extracellular segment spans residues serine 420–alanine 444. Residues alanine 445–leucine 465 form a helical membrane-spanning segment. Topologically, residues glutamate 466–alanine 487 are cytoplasmic. The helical transmembrane segment at isoleucine 488–isoleucine 508 threads the bilayer. At serine 509–glutamine 528 the chain is on the extracellular side. The chain crosses the membrane as a helical span at residues leucine 529–alanine 550. Residues histidine 551–arginine 573 lie on the Cytoplasmic side of the membrane. Residues methionine 574–serine 594 form a helical membrane-spanning segment. Residues alanine 595 to lysine 608 lie on the Extracellular side of the membrane. The chain crosses the membrane as a helical span at residues isoleucine 609 to phenylalanine 629. Residues threonine 630–asparagine 695 are Cytoplasmic-facing.

Belongs to the G-protein coupled receptor 1 family. FSH/LSH/TSH subfamily. In terms of assembly, homotrimer. Functions as a homotrimer binding the FSH hormone heterodimer composed of CGA and FSHB. Interacts with ARRB2. Interacts with APPL2; interaction is independent of follicle stimulating hormone stimulation. Post-translationally, N-glycosylated; indirectly required for FSH-binding, possibly via a conformational change that allows high affinity binding of hormone. Sulfated.

Its subcellular location is the cell membrane. In terms of biological role, g protein-coupled receptor for follitropin, the follicle-stimulating hormone. Through cAMP production activates the downstream PI3K-AKT and ERK1/ERK2 signaling pathways. This chain is Follicle-stimulating hormone receptor (FSHR), found in Felis catus (Cat).